The chain runs to 349 residues: Phosphoribosylformylglycinamidine cyclo-ligase (349 aa).

It belongs to the AIR synthase family.

It is found in the cytoplasm. It carries out the reaction 2-formamido-N(1)-(5-O-phospho-beta-D-ribosyl)acetamidine + ATP = 5-amino-1-(5-phospho-beta-D-ribosyl)imidazole + ADP + phosphate + H(+). The protein operates within purine metabolism; IMP biosynthesis via de novo pathway; 5-amino-1-(5-phospho-D-ribosyl)imidazole from N(2)-formyl-N(1)-(5-phospho-D-ribosyl)glycinamide: step 2/2. This chain is Phosphoribosylformylglycinamidine cyclo-ligase, found in Methanococcus maripaludis (strain C7 / ATCC BAA-1331).